Consider the following 228-residue polypeptide: Probable ribosomal RNA small subunit methyltransferase A (228 aa).

6 residues coordinate S-adenosyl-L-methionine: H9, L11, G34, E55, D78, and N93.

Belongs to the class I-like SAM-binding methyltransferase superfamily. rRNA adenine N(6)-methyltransferase family. RsmA subfamily.

Its subcellular location is the cytoplasm. In terms of biological role, specifically dimethylates two adjacent adenosines in the loop of a conserved hairpin near the 3'-end of 16S rRNA in the 30S particle. May play a critical role in biogenesis of 30S subunits. In Pyrobaculum aerophilum (strain ATCC 51768 / DSM 7523 / JCM 9630 / CIP 104966 / NBRC 100827 / IM2), this protein is Probable ribosomal RNA small subunit methyltransferase A.